The following is a 309-amino-acid chain: Dicarboxylate carrier UCP2 (309 aa).

Residues 1–16 (MVGFKATDVPPTATVK) lie on the Mitochondrial intermembrane side of the membrane. Solcar repeat units follow at residues 11–106 (PTAT…VKQF), 114–203 (AGIG…IKDT), and 212–297 (DDLP…LKRA). An important for interaction with long-chain fatty acids region spans residues 16 to 63 (KFLGAGTAACIADLITFPLDTAKVRLQIQGESQGLARTAASAQYRGVL). A helical membrane pass occupies residues 17 to 40 (FLGAGTAACIADLITFPLDTAKVR). At 41 to 77 (LQIQGESQGLARTAASAQYRGVLGTILTMVRTEGPRS) the chain is on the mitochondrial matrix side. Residues 78-103 (LYNGLVAGLQRQMSFASVRIGLYDSV) form a helical membrane-spanning segment. At 104 to 119 (KQFYTKGSEHAGIGSR) the chain is on the mitochondrial intermembrane side. A helical transmembrane segment spans residues 120–145 (LLAGSTTGALAVAVAQPTDVVKVRFQ). Residues 146-173 (AQARAGGGRRYQSTVEAYKTIAREEGIR) are Mitochondrial matrix-facing. A helical membrane pass occupies residues 174–199 (GLWKGTSPNVARNAIVNCTELVTYDL). Residues 200-217 (IKDTLLKANLMTDDLPCH) lie on the Mitochondrial intermembrane side of the membrane. A helical transmembrane segment spans residues 218–242 (FTSAFGAGFCTTVIASPVDVVKTRY). The Mitochondrial matrix segment spans residues 243–268 (MNSALGQYHSAGHCALTMLRKEGPRA). Residues 269–294 (FYKGFMPSFLRLGSWNVVMFVTYEQL) traverse the membrane as a helical segment. Residues 278–285 (LRLGSWNV) are important for interaction with long-chain fatty acids. Residues 295–309 (KRALMAAYESREAPF) lie on the Mitochondrial intermembrane side of the membrane.

It belongs to the mitochondrial carrier (TC 2.A.29) family. Homotetramer. Adopts an asymmetrical dimer of dimers functional form. Interacts with MICU1 (when methylated); leading to decrease the calcium sensitivity of MICU1. Expressed in a variety of organs, with predominant expression in the heart, lung and spleen.

The protein resides in the mitochondrion inner membrane. The catalysed reaction is L-aspartate(out) + phosphate(in) + H(+)(in) = L-aspartate(in) + phosphate(out) + H(+)(out). The enzyme catalyses oxaloacetate(out) + phosphate(in) + H(+)(in) = oxaloacetate(in) + phosphate(out) + H(+)(out). It carries out the reaction (S)-malate(out) + phosphate(in) + H(+)(in) = (S)-malate(in) + phosphate(out) + H(+)(out). It catalyses the reaction malonate(out) + phosphate(in) + H(+)(in) = malonate(in) + phosphate(out) + H(+)(out). The catalysed reaction is sulfate(out) + phosphate(in) + H(+)(in) = sulfate(in) + phosphate(out) + H(+)(out). The enzyme catalyses (S)-malate(out) = (S)-malate(in). It carries out the reaction L-aspartate(out) = L-aspartate(in). It catalyses the reaction phosphate(in) = phosphate(out). The catalysed reaction is chloride(in) = chloride(out). The enzyme catalyses H(+)(in) = H(+)(out). It carries out the reaction a long-chain fatty acid(out) = a long-chain fatty acid(in). Its function is as follows. Antiporter that exports dicarboxylate intermediates of the Krebs cycle in exchange for phosphate plus a proton across the inner membrane of mitochondria, a process driven by mitochondrial motive force with an overall impact on glycolysis, glutaminolysis and glutathione-dependent redox balance. Continuous export of oxaloacetate and related four-carbon dicarboxylates from mitochondrial matrix into the cytosol negatively regulates the oxidation of acetyl-CoA substrates via the Krebs cycle lowering the ATP/ADP ratio and reactive oxygen species (ROS) production. May mediate inducible proton entry into the mitochondrial matrix affecting ATP turnover as a protection mechanism against oxidative stress. The proton currents are most likely associated with fatty acid flipping across the inner membrane of mitochondria in a metabolic process regulated by free fatty acids and purine nucleotides. Regulates the use of glucose as a source of energy. Required for glucose-induced DRP1-dependent mitochondrial fission and neuron activation in the ventromedial nucleus of the hypothalamus (VMH). This mitochondrial adaptation mechanism modulates the VMH pool of glucose-excited neurons with an impact on systemic glucose homeostasis. Regulates ROS levels and metabolic reprogramming of macrophages during the resolution phase of inflammation. Attenuates ROS production in response to IL33 to preserve the integrity of the Krebs cycle required for persistent production of itaconate and subsequent GATA3-dependent differentiation of inflammation-resolving alternatively activated macrophages. Can unidirectionally transport anions including L-malate, L-aspartate, phosphate and chloride ions. Does not mediate adaptive thermogenesis. The sequence is that of Dicarboxylate carrier UCP2 (Ucp2) from Rattus norvegicus (Rat).